The following is a 2643-amino-acid chain: BAH and coiled-coil domain-containing protein 1 (2643 aa).

Disordered regions lie at residues 23–45 (SAAA…HFQP) and 84–106 (SAAS…RGSH). Lys220 is modified (N6-acetyllysine). 2 stretches are compositionally biased toward basic and acidic residues: residues 224–249 (KEKV…DRQK) and 683–702 (ERPD…DGEV). Disordered regions lie at residues 224–273 (KEKV…SCEG), 674–704 (PATK…EVRQ), 721–758 (GRPD…LESE), 985–1023 (RKPE…PSSA), and 1038–1299 (TLKT…KALP). Residues 985–1003 (RKPEDRHMELEEAAQEKTP) are compositionally biased toward basic and acidic residues. A compositionally biased stretch (pro residues) spans 1133 to 1149 (RPEPPRTFLPGEPPPCS). A compositionally biased stretch (polar residues) spans 1210–1224 (ATGQTNSTQGGMQNE). The span at 1269-1284 (QEEETQLEESGGDSEV) shows a compositional bias: acidic residues. Coiled coils occupy residues 1346 to 1373 (ALLS…DVLA) and 1437 to 1486 (LKAA…SSRS). The segment covering 1466 to 1484 (QRELARLQRRHDHEREESS) has biased composition (basic and acidic residues). 8 disordered regions span residues 1466 to 1520 (QREL…DSKK), 1537 to 1559 (GDEP…QSVS), 1604 to 1641 (KEAA…GREM), 1746 to 1781 (RAPG…SRDT), 1875 to 1896 (FDED…GVQL), 2055 to 2124 (SSCR…HFLG), 2322 to 2341 (CPSS…TGVP), and 2349 to 2386 (SMSS…SDDE). Residues 1487-1501 (PARRGPGRPRKRKHS) show a composition bias toward basic residues. The segment covering 1631 to 1641 (PHPDGDSGREM) has biased composition (basic and acidic residues). Over residues 1757 to 1767 (GKKKAKGKVKT) the composition is skewed to basic residues. Residues 1875 to 1892 (FDEDDTSFSDEEEEEEEA) are compositionally biased toward acidic residues. Residues 2349–2374 (SMSSSSSGSSTSSSSGSVSTSSLCSS) show a composition bias toward low complexity. Residues 2375-2386 (DNEDSSYSSDDE) show a composition bias toward acidic residues. The region spanning 2517–2637 (ETLRIGDCAV…PTTGRLVTAD (121 aa)) is the BAH domain.

The sequence is that of BAH and coiled-coil domain-containing protein 1 (Bahcc1) from Mus musculus (Mouse).